The following is a 392-amino-acid chain: Speckle-type POZ protein-like (392 aa).

One can recognise an MATH domain in the interval 31–161; sequence KFSYMWTINN…DDKLTLYCEV (131 aa). The 68-residue stretch at 200–267 folds into the BTB domain; that stretch reads TDCSLFVEGK…IYTGGTPHVD (68 aa).

It belongs to the Tdpoz family. Homodimer. Heterodimer with SPOP. Component of cullin-RING-based BCR (BTB-CUL3-RBX1) E3 ubiquitin-protein ligase complexes containing homodimeric SPOPL or the heterodimer formed by SPOP and SPOPL.

Its subcellular location is the nucleus. It participates in protein modification; protein ubiquitination. Functionally, component of a cullin-RING-based BCR (BTB-CUL3-RBX1) E3 ubiquitin-protein ligase complex that mediates the ubiquitination and subsequent proteasomal degradation of target proteins, but with relatively low efficiency. This Xenopus laevis (African clawed frog) protein is Speckle-type POZ protein-like (spopl).